Here is a 1334-residue protein sequence, read N- to C-terminus: Adenylate cyclase type 9 (1334 aa).

Disordered stretches follow at residues 1 to 28 and 49 to 71; these read MASP…SNSV and ISSS…GLRR. Topologically, residues 1-113 are cytoplasmic; sequence MASPPHQQLL…CFPQTQRRFR (113 aa). Polar residues predominate over residues 16–28; the sequence is EVSCDSSGDSNSV. Over residues 57 to 69 the composition is skewed to gly residues; sequence ESGGVGRGGGGGL. Residues 114-134 traverse the membrane as a helical segment; the sequence is YALFYIGSACLLWGIYFGVHM. The Extracellular portion of the chain corresponds to 135 to 137; that stretch reads REK. The helical transmembrane segment at 138–158 threads the bilayer; the sequence is QMVFMVPALCFLLVCVAFFAF. The Cytoplasmic segment spans residues 159-167; that stretch reads TFTKAYARR. A helical transmembrane segment spans residues 168–187; sequence YVWTSGYTLLVFALTLAPQF. The Extracellular portion of the chain corresponds to 188-207; the sequence is QPWTLGERQRVQPRPAAPVD. The helical transmembrane segment at 208–227 threads the bilayer; that stretch reads TCLSQVGSFSMCVEVLLLLY. The Cytoplasmic portion of the chain corresponds to 228-233; sequence TVMHLP. Residues 234 to 250 form a helical membrane-spanning segment; the sequence is LYLSLFLGLSYSVLFET. The Extracellular portion of the chain corresponds to 251–269; it reads SAFRDESCTLLGGGAVYWE. The chain crosses the membrane as a helical span at residues 270 to 290; it reads LLSKAFLHVCIHAIGIHLFIM. The Cytoplasmic segment spans residues 291–768; sequence SEVRSRSTFL…VKTFASATFS (478 aa). The interval 338 to 363 is disordered; that stretch reads QGDDESENSVKRHSTSSPKNRKKKPS. Positions 348 to 363 are enriched in basic residues; that stretch reads KRHSTSSPKNRKKKPS. Residues Asp-388, Ile-389, and Asp-432 each contribute to the Mg(2+) site. ATP-binding positions include 388 to 393, 430 to 432, and Arg-476; these read DIVGFT and LGD. Residues 635–670 are disordered; it reads GCQDEHKNSTKAPGGHSPKTQNGLLSPPQEEKLSNS. Residues 769 to 789 form a helical membrane-spanning segment; the sequence is SLLDVFLSTTVFLILSVTCFL. Topologically, residues 790-800 are extracellular; that stretch reads KHGMVASPPPP. A helical transmembrane segment spans residues 801 to 821; sequence AAVVVFVIAILLEVLSLVISV. Over 822 to 849 the chain is Cytoplasmic; the sequence is RMVFFLEEVMACTKRLLELISGWLPRHF. A helical membrane pass occupies residues 850–870; the sequence is LGAILVSLPALAVFSHFTSDF. The Extracellular portion of the chain corresponds to 871 to 873; the sequence is ETN. The chain crosses the membrane as a helical span at residues 874-894; sequence IHYTMFMCCAILIAIVQYCNF. Over 895 to 902 the chain is Cytoplasmic; it reads CQLSSWMR. The helical transmembrane segment at 903-923 threads the bilayer; that stretch reads SLLATVVGAVLLILLYVSLCP. Residues 924–957 are Extracellular-facing; sequence DSSVETLHLDLAQNLSSRKSPCNSSMPADVKRPA. 2 N-linked (GlcNAc...) asparagine glycosylation sites follow: Asn-937 and Asn-946. The helical transmembrane segment at 958-978 threads the bilayer; the sequence is DLIGQEVILAVFLLLLLVWFL. Over 979–1334 the chain is Cytoplasmic; that stretch reads NRSFEVSYRL…LTKLNVSKSV (356 aa). ATP is bound by residues Lys-1090, 1167-1169, 1174-1178, and Lys-1214; these read DIW and NIASR. The segment at 1266–1303 is disordered; the sequence is SVQNSDKTAHATDNSETKDALPSSKKLQKEPTKAEERC. Composition is skewed to basic and acidic residues over residues 1272–1284 and 1292–1303; these read KTAH…ETKD and LQKEPTKAEERC.

It belongs to the adenylyl cyclase class-4/guanylyl cyclase family. The cofactor is Mg(2+). Mn(2+) serves as cofactor. As to expression, detected in embryonic heart (at protein level).

The protein localises to the cell membrane. The protein resides in the membrane. The catalysed reaction is ATP = 3',5'-cyclic AMP + diphosphate. With respect to regulation, insensitive to calcium/calmodulin, forskolin and somatostatin. Stimulated by beta-adrenergic receptor activation. Activity is down-regulated by calcium/calcineurin. Functionally, adenylyl cyclase that catalyzes the formation of the signaling molecule cAMP in response to activation of G protein-coupled receptors. This Gallus gallus (Chicken) protein is Adenylate cyclase type 9 (ADCY9).